The sequence spans 388 residues: Queuine tRNA-ribosyltransferase (388 aa).

Residue aspartate 90 is the Proton acceptor of the active site. Substrate contacts are provided by residues 90–94 (DSGGF), aspartate 144, glutamine 205, and glycine 232. The segment at 263-269 (GVGTPED) is RNA binding. The active-site Nucleophile is the aspartate 282. Residues 287-291 (TRNAR) are RNA binding; important for wobble base 34 recognition. Positions 320, 322, 325, and 351 each coordinate Zn(2+).

This sequence belongs to the queuine tRNA-ribosyltransferase family. Homodimer. Within each dimer, one monomer is responsible for RNA recognition and catalysis, while the other monomer binds to the replacement base PreQ1. Zn(2+) serves as cofactor.

The catalysed reaction is 7-aminomethyl-7-carbaguanine + guanosine(34) in tRNA = 7-aminomethyl-7-carbaguanosine(34) in tRNA + guanine. Its pathway is tRNA modification; tRNA-queuosine biosynthesis. Functionally, catalyzes the base-exchange of a guanine (G) residue with the queuine precursor 7-aminomethyl-7-deazaguanine (PreQ1) at position 34 (anticodon wobble position) in tRNAs with GU(N) anticodons (tRNA-Asp, -Asn, -His and -Tyr). Catalysis occurs through a double-displacement mechanism. The nucleophile active site attacks the C1' of nucleotide 34 to detach the guanine base from the RNA, forming a covalent enzyme-RNA intermediate. The proton acceptor active site deprotonates the incoming PreQ1, allowing a nucleophilic attack on the C1' of the ribose to form the product. After dissociation, two additional enzymatic reactions on the tRNA convert PreQ1 to queuine (Q), resulting in the hypermodified nucleoside queuosine (7-(((4,5-cis-dihydroxy-2-cyclopenten-1-yl)amino)methyl)-7-deazaguanosine). In Campylobacter curvus (strain 525.92), this protein is Queuine tRNA-ribosyltransferase.